An 880-amino-acid chain; its full sequence is Translation initiation factor IF-2 (880 aa).

2 stretches are compositionally biased toward basic and acidic residues: residues 180–194 (QEAA…EAAK) and 202–228 (LAEE…DHHI). The interval 180–289 (QEAATKRKQD…APESMAHGFN (110 aa)) is disordered. Residues 249 to 262 (GRRARNKSNAKKRG) are compositionally biased toward basic residues. Residues 380 to 549 (SRAPVVTIMG…LLQAEVLELK (170 aa)) enclose the tr-type G domain. A G1 region spans residues 389 to 396 (GHVDHGKT). 389 to 396 (GHVDHGKT) provides a ligand contact to GTP. A G2 region spans residues 414 to 418 (GITQH). Residues 435-438 (DTPG) form a G3 region. GTP is bound by residues 435 to 439 (DTPGH) and 489 to 492 (NKMD). Residues 489–492 (NKMD) are G4. The tract at residues 525-527 (SAK) is G5.

This sequence belongs to the TRAFAC class translation factor GTPase superfamily. Classic translation factor GTPase family. IF-2 subfamily.

Its subcellular location is the cytoplasm. In terms of biological role, one of the essential components for the initiation of protein synthesis. Protects formylmethionyl-tRNA from spontaneous hydrolysis and promotes its binding to the 30S ribosomal subunits. Also involved in the hydrolysis of GTP during the formation of the 70S ribosomal complex. This chain is Translation initiation factor IF-2, found in Shewanella baltica (strain OS223).